A 273-amino-acid chain; its full sequence is 3-methyl-2-oxobutanoate hydroxymethyltransferase 2 (273 aa).

Residues aspartate 50 and aspartate 89 each coordinate Mg(2+). 3-methyl-2-oxobutanoate contacts are provided by residues 50-51 (DS), aspartate 89, and lysine 119. Glutamate 121 serves as a coordination point for Mg(2+). Glutamate 188 functions as the Proton acceptor in the catalytic mechanism.

This sequence belongs to the PanB family. In terms of assembly, homodecamer; pentamer of dimers. It depends on Mg(2+) as a cofactor.

It localises to the cytoplasm. It carries out the reaction 3-methyl-2-oxobutanoate + (6R)-5,10-methylene-5,6,7,8-tetrahydrofolate + H2O = 2-dehydropantoate + (6S)-5,6,7,8-tetrahydrofolate. It participates in cofactor biosynthesis; (R)-pantothenate biosynthesis; (R)-pantoate from 3-methyl-2-oxobutanoate: step 1/2. Its function is as follows. Catalyzes the reversible reaction in which hydroxymethyl group from 5,10-methylenetetrahydrofolate is transferred onto alpha-ketoisovalerate to form ketopantoate. This Zymomonas mobilis subsp. mobilis (strain ATCC 31821 / ZM4 / CP4) protein is 3-methyl-2-oxobutanoate hydroxymethyltransferase 2.